We begin with the raw amino-acid sequence, 124 residues long: Protein RibT (124 aa).

One can recognise an N-acetyltransferase domain in the interval 3-124 (IRYKKSFEKI…QQDQDISYNN (122 aa)).

Its function is as follows. Involved in riboflavin biosynthesis. The protein is Protein RibT (ribT) of Bacillus subtilis (strain 168).